A 419-amino-acid chain; its full sequence is DNA-directed RNA polymerase I subunit RPA49 (419 aa).

Ser-35 and Ser-163 each carry phosphoserine. Lys-373 carries the N6-acetyllysine modification. Residues 397 to 419 are disordered; it reads GTLSLPLPPAQTSDRLAKRRKIT.

Belongs to the eukaryotic RPA49/POLR1E RNA polymerase subunit family. In terms of assembly, component of the RNA polymerase I (Pol I) complex consisting of 13 subunits: a ten-subunit catalytic core composed of POLR1A/RPA1, POLR1B/RPA2, POLR1C/RPAC1, POLR1D/RPAC2, POLR1H/RPA12, POLR2E/RPABC1, POLR2F/RPABC2, POLR2H/RPABC3, POLR2K/RPABC4 and POLR2L/RPABC5; a mobile stalk subunit POLR1F/RPA43 protruding from the core and additional subunits homologous to general transcription factors POLR1E/RPA49 and POLR1G/RPA34. Forms a heterodimer with POLR1G/RPA34. Interacts with POLR1G. Also binds UBTF/UBF. Interacts with PWP1. In terms of processing, acetylated at Lys-373 by CREBBP/CBP, leading to decreased RNA polymerase I transcription. In normal conditions, deacetylated by SIRT7, promoting the association of RNA polymerase I with the rDNA promoter region and coding region. In response to stress, SIRT7 is released from nucleoli leading to hyperacetylation of POLR1E/PAF53 and decreased association of RNA polymerase I with the rDNA promoter region.

It localises to the nucleus. The protein localises to the nucleolus. Its function is as follows. Component of RNA polymerase I (Pol I), a DNA-dependent RNA polymerase which synthesizes ribosomal RNA precursors using the four ribonucleoside triphosphates as substrates. Appears to be involved in the formation of the initiation complex at the promoter by mediating the interaction between Pol I and UBTF/UBF. In Homo sapiens (Human), this protein is DNA-directed RNA polymerase I subunit RPA49 (POLR1E).